A 747-amino-acid polypeptide reads, in one-letter code: Mitochondrial inner membrane i-AAA protease supercomplex subunit YME1 (747 aa).

Over residues 51–64 the composition is skewed to basic and acidic residues; the sequence is KNSGEMPPKKEADS. Residues 51 to 92 form a disordered region; it reads KNSGEMPPKKEADSSGKASNKSTISSIDNSQPPPPSNTNDKT. Residues 66 to 80 show a composition bias toward polar residues; that stretch reads GKASNKSTISSIDNS. Residue 321 to 328 participates in ATP binding; that stretch reads GPPGTGKT. Zn(2+) is bound at residue H540. E541 is a catalytic residue. Zn(2+)-binding residues include H544 and D618. Positions 718 to 747 are disordered; the sequence is STNTVVEGPDSDERKDIGDDKPKIPTMLNA. Residues 728-740 are compositionally biased toward basic and acidic residues; that stretch reads SDERKDIGDDKPK.

The protein in the N-terminal section; belongs to the AAA ATPase family. This sequence in the C-terminal section; belongs to the peptidase M41 family. As to quaternary structure, component of the mitochondrial inner membrane i-AAA protease supercomplex composed of MGR1, MGR3 and YME1. Interacts directly with MGR1. The cofactor is Zn(2+).

It is found in the mitochondrion inner membrane. Catalytic subunit of the mitochondrial inner membrane i-AAA protease supercomplex required for mitochondrial inner membrane protein turnover. The protease is probably ATP-dependent. Important to maintain the integrity of the mitochondrial compartment. Required both for the degradation of unassembled subunit 2 of cytochrome c oxidase (COX2) and for efficient assembly of mitochondrial respiratory chain. Binds unfolded substrates in an ATPase-independent manner; binding of folded COX2, a physiological substrate, requires an active ATPase but when COX2 is destabilized an active ATPase is no longer necessary. May process ATG32. This is Mitochondrial inner membrane i-AAA protease supercomplex subunit YME1 (YME1) from Saccharomyces cerevisiae (strain ATCC 204508 / S288c) (Baker's yeast).